The following is a 585-amino-acid chain: Glutamate decarboxylase 2 (585 aa).

The tract at residues 1-24 (MASPGSGFWSFGSEDGSGDPENSG) is disordered. S3, S6, S10, and S13 each carry phosphoserine. Residues C30 and C45 are each lipidated (S-palmitoyl cysteine). 181–183 (QLS) is a binding site for substrate. K396 is subject to N6-(pyridoxal phosphate)lysine. R558 serves as a coordination point for substrate.

This sequence belongs to the group II decarboxylase family. In terms of assembly, homodimer. Pyridoxal 5'-phosphate is required as a cofactor. Post-translationally, phosphorylated; which does not affect kinetic parameters or subcellular location. Palmitoylated; which is required for presynaptic clustering.

The protein resides in the cytoplasm. Its subcellular location is the cytosol. It localises to the cytoplasmic vesicle. It is found in the presynaptic cell membrane. The protein localises to the golgi apparatus membrane. The enzyme catalyses L-glutamate + H(+) = 4-aminobutanoate + CO2. Functionally, catalyzes the production of GABA. In Sus scrofa (Pig), this protein is Glutamate decarboxylase 2 (GAD2).